The sequence spans 130 residues: Snaclec B8 (130 aa).

3 disulfides stabilise this stretch: Cys2–Cys13, Cys30–Cys124, and Cys99–Cys116. Positions 9–125 (HEGHCYKVFK…CELAYHFICM (117 aa)) constitute a C-type lectin domain.

Belongs to the snaclec family. In terms of assembly, heterodimer; disulfide-linked. As to expression, expressed by the venom gland.

Its subcellular location is the secreted. In terms of biological role, interferes with one step of hemostasis (modulation of platelet aggregation, or coagulation cascade, for example). The sequence is that of Snaclec B8 from Macrovipera lebetinus (Levantine viper).